The primary structure comprises 450 residues: MARRGAAVAEEPLLPSSGIVGIGPIEGINWRTWLVQVFCFALTTSVLFITLVTASLPQTGYPCFYGSLVDYTQKNHSVVDGVWMRQIAGGVAPTLFLETTSLVAFLYYTTLVLVAISFYLIISAVLVRRYARGKECTAVAGCTRPTTTLIASHVTLVLGTLATWLLQVVILLLSHKQAVLGAAVYVVHFVSLVFFCMSFSGLGTASAQYSSNLRILKTNLPALHKMAGPGRAVMTNLGMGMLGISLPILSLMLGIILANSFHITLWQTVTVAVGVFVALGLMFLIIVELIVSHYVHVLVGPALAVLVASSTLAVATHSYFVHFHAMVSVQAPNLATASKAIVGIMAVISIIMLVVRLVRAIMFHKKRNTEFYGRVKTVSSKARRYANKVRGPRRNPQPLNVAESRGMLLAEDSETDAEEPIYDVVSEEFETEYYDDPQRVPERSHRREYR.

At 1–31 (MARRGAAVAEEPLLPSSGIVGIGPIEGINWR) the chain is on the intravirion side. The helical transmembrane segment at 32–52 (TWLVQVFCFALTTSVLFITLV) threads the bilayer. Topologically, residues 53 to 101 (TASLPQTGYPCFYGSLVDYTQKNHSVVDGVWMRQIAGGVAPTLFLETTS) are virion surface. The helical transmembrane segment at 102 to 122 (LVAFLYYTTLVLVAISFYLII) threads the bilayer. Residues 123-153 (SAVLVRRYARGKECTAVAGCTRPTTTLIASH) are Intravirion-facing. The helical transmembrane segment at 154-174 (VTLVLGTLATWLLQVVILLLS) threads the bilayer. At 175–178 (HKQA) the chain is on the virion surface side. Residues 179-199 (VLGAAVYVVHFVSLVFFCMSF) traverse the membrane as a helical segment. Residues 200–236 (SGLGTASAQYSSNLRILKTNLPALHKMAGPGRAVMTN) lie on the Intravirion side of the membrane. A helical transmembrane segment spans residues 237–257 (LGMGMLGISLPILSLMLGIIL). The Virion surface segment spans residues 258–270 (ANSFHITLWQTVT). A helical transmembrane segment spans residues 271–291 (VAVGVFVALGLMFLIIVELIV). Residues 292–294 (SHY) are Intravirion-facing. The helical transmembrane segment at 295-315 (VHVLVGPALAVLVASSTLAVA) threads the bilayer. Residues 316–334 (THSYFVHFHAMVSVQAPNL) lie on the Virion surface side of the membrane. The helical transmembrane segment at 335–355 (ATASKAIVGIMAVISIIMLVV) threads the bilayer. Over 356 to 450 (RLVRAIMFHK…PERSHRREYR (95 aa)) the chain is Intravirion.

It belongs to the herpesviridae glycoprotein M family. Interacts (via N-terminus) with gN (via N-terminus). The gM-gN heterodimer forms the gCII complex.

It is found in the virion membrane. The protein resides in the host Golgi apparatus. Its subcellular location is the host trans-Golgi network. The protein localises to the host endosome membrane. It localises to the host nucleus inner membrane. Envelope glycoprotein important for virion assembly and egress. Plays a role in the correct incorporation of gH-gL into virion membrane. Directs the glycoprotein N (gN) to the host trans-Golgi network. This Equus caballus (Horse) protein is Envelope glycoprotein M.